The following is a 150-amino-acid chain: Transthyretin (150 aa).

An N-terminal signal peptide occupies residues Met-1–Ala-20. Position 30 is a sulfocysteine (Cys-30). Lys-35 contributes to the L-thyroxine binding site. Glu-62 carries the post-translational modification 4-carboxyglutamate. Residue Glu-74 participates in L-thyroxine binding. Residue Asn-118 is glycosylated (N-linked (GlcNAc...) asparagine). L-thyroxine is bound at residue Ser-137.

This sequence belongs to the transthyretin family. In terms of assembly, homotetramer. Dimer of dimers. In the homotetramer, subunits assemble around a central channel that can accommodate two ligand molecules. Interacts with RBP4. Sulfonation of the reactive cysteine Cys-30 enhances the stability of the native conformation of TTR, avoiding misassembly of the protein leading to amyloid formation. In terms of tissue distribution, detected in plasma and cerebrospinal fluid (at protein level). Highly expressed in the choroid plexus. Detected in liver.

It localises to the secreted. Functionally, thyroid hormone-binding protein. Probably transports thyroxine from the bloodstream to the brain. The chain is Transthyretin (TTR) from Sus scrofa (Pig).